Here is a 383-residue protein sequence, read N- to C-terminus: Pentatricopeptide repeat-containing protein 2, mitochondrial (383 aa).

The stretch at 161 to 195 (TSFNILMDMLFIKGKYKSALEVLIEMKNQNVKFTT) is one PPR repeat. S377 bears the Phosphoserine mark.

It belongs to the PTCD2 family.

The protein resides in the mitochondrion. Functionally, involved in mitochondrial RNA maturation and mitochondrial respiratory chain function. This Pongo abelii (Sumatran orangutan) protein is Pentatricopeptide repeat-containing protein 2, mitochondrial (PTCD2).